The chain runs to 136 residues: Large ribosomal subunit protein uL16 (136 aa).

Belongs to the universal ribosomal protein uL16 family. In terms of assembly, part of the 50S ribosomal subunit.

Functionally, binds 23S rRNA and is also seen to make contacts with the A and possibly P site tRNAs. The protein is Large ribosomal subunit protein uL16 of Shewanella sediminis (strain HAW-EB3).